We begin with the raw amino-acid sequence, 471 residues long: Alpha-galactosidase (471 aa).

Positions 1-18 are cleaved as a signal peptide; that stretch reads MSYIYLFITAAAVTGALG. Cysteine 42 and cysteine 74 are joined by a disulfide. Residues aspartate 72 and aspartate 73 each contribute to the substrate site. Residue asparagine 82 is glycosylated (N-linked (GlcNAc...) asparagine). The cysteines at positions 121 and 151 are disulfide-linked. Lysine 147 contributes to the substrate binding site. The active-site Nucleophile is the aspartate 149. Asparagine 175 carries an N-linked (GlcNAc...) asparagine glycan. Substrate is bound at residue arginine 205. The Proton donor role is filled by aspartate 209. Disulfide bonds link cysteine 221-cysteine 237 and cysteine 223-cysteine 230. Glutamine 251 lines the substrate pocket. Asparagine 270, asparagine 361, asparagine 370, asparagine 417, asparagine 422, asparagine 435, and asparagine 454 each carry an N-linked (GlcNAc...) asparagine glycan.

It belongs to the glycosyl hydrolase 27 family. Homotetramer.

It is found in the secreted. The enzyme catalyses Hydrolysis of terminal, non-reducing alpha-D-galactose residues in alpha-D-galactosides, including galactose oligosaccharides, galactomannans and galactolipids.. In Saccharomyces mikatae (Yeast), this protein is Alpha-galactosidase (MEL).